The chain runs to 352 residues: Endoplasmic reticulum GDP-fucose transporter (352 aa).

Helical transmembrane passes span 9 to 29, 34 to 54, 70 to 90, 96 to 116, 126 to 146, 163 to 183, 201 to 221, 249 to 271, 276 to 298, and 305 to 325; these read LGML…ELII, GAGN…GLVF, YVIL…AFNF, LHMI…IVLL, SSVA…SGDV, FFWW…TAYM, ALFF…GNIV, LMLF…VYVL, ASLT…SIIY, and LNHW…ANVI. The Prevents secretion from ER signature appears at 350 to 352; that stretch reads KVE.

It belongs to the nucleotide-sugar transporter family. SLC35B subfamily.

It is found in the endoplasmic reticulum membrane. Sugar transporter that specifically mediates the transport of UDP-N-acetylglucosamine (UDP-GlcNAc), GDP-fucose and UDP-xylose. Functions redundantly with Gfr in the O-fucosylation of Notch, positively regulating Notch signaling. Involved in the biosynthesis of heparan sulfate-glycosaminoglycan (HS-GAG) and in Dpp signaling in the wing imaginal disk. This chain is Endoplasmic reticulum GDP-fucose transporter, found in Drosophila melanogaster (Fruit fly).